Reading from the N-terminus, the 253-residue chain is Imidazole glycerol phosphate synthase subunit HisF (253 aa).

Active-site residues include Asp11 and Asp130.

This sequence belongs to the HisA/HisF family. As to quaternary structure, heterodimer of HisH and HisF.

It localises to the cytoplasm. It catalyses the reaction 5-[(5-phospho-1-deoxy-D-ribulos-1-ylimino)methylamino]-1-(5-phospho-beta-D-ribosyl)imidazole-4-carboxamide + L-glutamine = D-erythro-1-(imidazol-4-yl)glycerol 3-phosphate + 5-amino-1-(5-phospho-beta-D-ribosyl)imidazole-4-carboxamide + L-glutamate + H(+). The protein operates within amino-acid biosynthesis; L-histidine biosynthesis; L-histidine from 5-phospho-alpha-D-ribose 1-diphosphate: step 5/9. IGPS catalyzes the conversion of PRFAR and glutamine to IGP, AICAR and glutamate. The HisF subunit catalyzes the cyclization activity that produces IGP and AICAR from PRFAR using the ammonia provided by the HisH subunit. The polypeptide is Imidazole glycerol phosphate synthase subunit HisF (Clostridium botulinum (strain Alaska E43 / Type E3)).